Consider the following 212-residue polypeptide: Large ribosomal subunit protein uL3 (212 aa).

Position 153 is an N5-methylglutamine (Q153).

The protein belongs to the universal ribosomal protein uL3 family. In terms of assembly, part of the 50S ribosomal subunit. Forms a cluster with proteins L14 and L19. In terms of processing, methylated by PrmB.

Functionally, one of the primary rRNA binding proteins, it binds directly near the 3'-end of the 23S rRNA, where it nucleates assembly of the 50S subunit. This Shewanella sediminis (strain HAW-EB3) protein is Large ribosomal subunit protein uL3.